A 193-amino-acid polypeptide reads, in one-letter code: Acyl carrier protein phosphodiesterase (193 aa).

It belongs to the AcpH family.

It carries out the reaction holo-[ACP] + H2O = apo-[ACP] + (R)-4'-phosphopantetheine + H(+). In terms of biological role, converts holo-ACP to apo-ACP by hydrolytic cleavage of the phosphopantetheine prosthetic group from ACP. The polypeptide is Acyl carrier protein phosphodiesterase (Shigella boydii serotype 18 (strain CDC 3083-94 / BS512)).